Here is a 314-residue protein sequence, read N- to C-terminus: Probable tRNA pseudouridine synthase B (314 aa).

Residues 1-10 show a composition bias toward basic residues; the sequence is MATRGRHRSR. A disordered region spans residues 1-30; the sequence is MATRGRHRSRTSGTSSEPMTLRAPPDERDL. Asp72 acts as the Nucleophile in catalysis. The PUA domain occupies 237 to 314; that stretch reads LPRVTIAPSA…LVVELDRMLV (78 aa).

Belongs to the pseudouridine synthase TruB family. Type 2 subfamily.

It catalyses the reaction uridine(55) in tRNA = pseudouridine(55) in tRNA. Could be responsible for synthesis of pseudouridine from uracil-55 in the psi GC loop of transfer RNAs. The polypeptide is Probable tRNA pseudouridine synthase B (Haloarcula marismortui (strain ATCC 43049 / DSM 3752 / JCM 8966 / VKM B-1809) (Halobacterium marismortui)).